Reading from the N-terminus, the 486-residue chain is NADH-quinone oxidoreductase subunit N (486 aa).

The next 13 membrane-spanning stretches (helical) occupy residues 5-25 (IGLS…ASLL), 41-61 (LITL…LVVF), 77-97 (GVTQ…MVMM), 118-138 (SAVG…FIGL), 165-185 (YFIL…FIFG), 209-229 (FLFG…IAPF), 245-265 (TAFM…RIIA), 275-295 (LFDI…AAAI), 304-324 (IAYS…TAGV), 335-355 (VIFY…IAAM), 380-400 (ALCL…LGFF), 413-433 (GLLW…YYYL), and 458-478 (VTAV…GPIF).

The protein belongs to the complex I subunit 2 family. NDH-1 is composed of 14 different subunits. Subunits NuoA, H, J, K, L, M, N constitute the membrane sector of the complex.

It localises to the cell inner membrane. It carries out the reaction a quinone + NADH + 5 H(+)(in) = a quinol + NAD(+) + 4 H(+)(out). In terms of biological role, NDH-1 shuttles electrons from NADH, via FMN and iron-sulfur (Fe-S) centers, to quinones in the respiratory chain. The immediate electron acceptor for the enzyme in this species is believed to be ubiquinone. Couples the redox reaction to proton translocation (for every two electrons transferred, four hydrogen ions are translocated across the cytoplasmic membrane), and thus conserves the redox energy in a proton gradient. This chain is NADH-quinone oxidoreductase subunit N, found in Bdellovibrio bacteriovorus (strain ATCC 15356 / DSM 50701 / NCIMB 9529 / HD100).